The primary structure comprises 599 residues: Ecdysone oxidase (599 aa).

Residues 137 to 140 (NDMV) and 537 to 538 (WH) each bind FAD. The active-site Proton acceptor is the His-538.

Belongs to the GMC oxidoreductase family. Requires FAD as cofactor.

The catalysed reaction is ecdysone + O2 = 3-dehydroecdysone + H2O2. In terms of biological role, involved in the inactivation of ecdysteroid molting hormones by converting ecdysteroids into 3-dehydroecdysteroids. This Spodoptera littoralis (Egyptian cotton leafworm) protein is Ecdysone oxidase.